The primary structure comprises 307 residues: Pantothenate kinase (307 aa).

Glycine 90–serine 97 contacts ATP.

It belongs to the prokaryotic pantothenate kinase family.

The protein localises to the cytoplasm. It catalyses the reaction (R)-pantothenate + ATP = (R)-4'-phosphopantothenate + ADP + H(+). The protein operates within cofactor biosynthesis; coenzyme A biosynthesis; CoA from (R)-pantothenate: step 1/5. This chain is Pantothenate kinase, found in Levilactobacillus brevis (strain ATCC 367 / BCRC 12310 / CIP 105137 / JCM 1170 / LMG 11437 / NCIMB 947 / NCTC 947) (Lactobacillus brevis).